A 3779-amino-acid chain; its full sequence is Protein DDB_G0268328 (3779 aa).

Disordered stretches follow at residues 24-56 (RQIKSQNKLQNKSQNNGNNNNNKDNNNINKDGS), 1001-1028 (HEDEEEEGDGDNSNNSNSQDSDGDDDDD), 1137-1165 (QDSTLPKRKQHGYYHQQQQQQQYHQQQQQ), 1513-1538 (PTNSIYNNNNNNNNNNNNTNSSSLLS), 1656-1690 (ETTVLEKETKETKDNNLENNNNNTNNSNNNNNNKE), 2027-2054 (SNSSNNNNNNNDGSTTSTTTLNRSDSNN), 2144-2184 (NNNN…NNSS), 2280-2325 (ISTT…NEQQ), 2508-2527 (QINNNNNNNEKEEEEEREEG), 2720-2748 (DGNNNNNNNNNQNNNNQNNNNNQNNNDSS), 2975-3030 (ESND…DSIK), and 3427-3450 (QSNTLNGTGGGGGNGGGNNGSGKL). Composition is skewed to low complexity over residues 26 to 56 (IKSQNKLQNKSQNNGNNNNNKDNNNINKDGS), 1011 to 1020 (DNSNNSNSQD), 1149 to 1165 (YYHQQQQQQQYHQQQQQ), and 1515 to 1538 (NSIYNNNNNNNNNNNNTNSSSLLS). Basic and acidic residues predominate over residues 1656 to 1671 (ETTVLEKETKETKDNN). The span at 1672–1687 (LENNNNNTNNSNNNNN) shows a compositional bias: low complexity. 2 stretches are compositionally biased toward low complexity: residues 2144-2182 (NNNNNNNNNNNNNNNNNNNNNNNNNNNNNNNNNNNNNNN) and 2285-2322 (NNNNNNNNNNNNNNNNNNNNNNNNNNNNNNNNNNNNNN). Composition is skewed to low complexity over residues 2722–2745 (NNNNNNNNNQNNNNQNNNNNQNNN) and 3015–3030 (SVNNNNNNNSNSDSIK). Over residues 3433–3446 (GTGGGGGNGGGNNG) the composition is skewed to gly residues.

This chain is Protein DDB_G0268328, found in Dictyostelium discoideum (Social amoeba).